The primary structure comprises 255 residues: Phosphatidylglycerol--prolipoprotein diacylglyceryl transferase (255 aa).

A run of 3 helical transmembrane segments spans residues 15-35 (WYGI…NLNC), 46-66 (IDVF…YYVV), and 84-104 (LGGL…YIVS). Position 130 (Arg130) interacts with a 1,2-diacyl-sn-glycero-3-phospho-(1'-sn-glycerol). 3 helical membrane passes run 169 to 189 (PTFL…VYIF), 196 to 216 (GTVI…IEGL), and 228 to 248 (VAQL…VYLK).

Belongs to the Lgt family.

It localises to the cell membrane. The catalysed reaction is L-cysteinyl-[prolipoprotein] + a 1,2-diacyl-sn-glycero-3-phospho-(1'-sn-glycerol) = an S-1,2-diacyl-sn-glyceryl-L-cysteinyl-[prolipoprotein] + sn-glycerol 1-phosphate + H(+). It functions in the pathway protein modification; lipoprotein biosynthesis (diacylglyceryl transfer). Catalyzes the transfer of the diacylglyceryl group from phosphatidylglycerol to the sulfhydryl group of the N-terminal cysteine of a prolipoprotein, the first step in the formation of mature lipoproteins. This is Phosphatidylglycerol--prolipoprotein diacylglyceryl transferase from Clostridium kluyveri (strain NBRC 12016).